We begin with the raw amino-acid sequence, 483 residues long: Probable glycosyltransferase 6 (483 aa).

At 1 to 40 (MAASETAPFGVSAASKGGGGVAGARAQHGQLAVAGRVHDA) the chain is on the cytoplasmic side. The chain crosses the membrane as a helical; Signal-anchor for type II membrane protein span at residues 41–61 (LVFAAGAVAAVLVLLATASFL). Residues 62-483 (SPMPVTNLVA…PLPFDYPAAR (422 aa)) lie on the Lumenal side of the membrane. N-linked (GlcNAc...) asparagine glycosylation is present at Asn-144.

The protein belongs to the glycosyltransferase 34 family.

Its subcellular location is the golgi apparatus membrane. Functionally, probable glycosyltransferase that may be involved in the biosynthesis of xyloglucan. The chain is Probable glycosyltransferase 6 from Oryza sativa subsp. japonica (Rice).